Reading from the N-terminus, the 400-residue chain is Mu-type opioid receptor (400 aa).

Residues Met-1 to Ile-68 lie on the Extracellular side of the membrane. Asn-9, Asn-12, Asn-33, Asn-40, and Asn-48 each carry an N-linked (GlcNAc...) asparagine glycan. Residues Thr-69–Tyr-93 form a helical membrane-spanning segment. At Val-94–Asn-106 the chain is on the cytoplasmic side. The helical transmembrane segment at Ile-107–Leu-131 threads the bilayer. The Extracellular portion of the chain corresponds to Met-132 to Cys-142. Cys-142 and Cys-219 form a disulfide bridge. The helical transmembrane segment at Lys-143–Val-165 threads the bilayer. Topologically, residues Asp-166 to Asn-185 are cytoplasmic. Tyr-168 bears the Phosphotyrosine mark. Residues Ala-186–Met-207 traverse the membrane as a helical segment. The Extracellular portion of the chain corresponds to Ala-208 to Trp-230. Residues Glu-231–Gly-255 traverse the membrane as a helical segment. Residues Leu-256–Arg-279 lie on the Cytoplasmic side of the membrane. Residues Ile-280–Ala-306 form a helical membrane-spanning segment. Residues Leu-307–Thr-314 are Extracellular-facing. A helical membrane pass occupies residues Phe-315 to Tyr-338. Residues Asn-334–Tyr-338 carry the NPxxY; plays a role in stabilizing the activated conformation of the receptor motif. The Cytoplasmic segment spans residues Ala-339–Pro-400. Cys-353 carries the S-palmitoyl cysteine lipid modification. At Ser-365 the chain carries Phosphoserine. Position 372 is a phosphothreonine (Thr-372). Ser-377 is subject to Phosphoserine. Thr-396 carries the phosphothreonine modification.

It belongs to the G-protein coupled receptor 1 family. In terms of assembly, forms homooligomers and heterooligomers with other GPCRs, such as OPRD1, OPRK1, OPRL1, NPFFR2, ADRA2A, SSTR2, CNR1 and CCR5 (probably in dimeric forms). Interacts with heterotrimeric G proteins; interaction with a heterotrimeric complex containing GNAI1, GNB1 and GNG2 stabilizes the active conformation of the receptor and increases its affinity for endomorphin-2, the synthetic opioid peptide DAMGO and for morphinan agonists. Interacts with PPL; the interaction disrupts agonist-mediated G-protein activation. Interacts (via C-terminus) with DNAJB4 (via C-terminus). Interacts with calmodulin; the interaction inhibits the constitutive activity of OPRM1; it abolishes basal and attenuates agonist-stimulated G-protein coupling. Interacts with FLNA, PLD2, RANBP9 and WLS and GPM6A. Interacts with RTP4. Interacts with SYP and GNAS. Interacts with RGS9, RGS17, RGS20, RGS4, PPP1R9B and HINT1. In terms of processing, phosphorylated. Differentially phosphorylated in basal and agonist-induced conditions. Agonist-mediated phosphorylation modulates receptor internalization. Phosphorylated by GRK2 in a agonist-dependent manner. Phosphorylation at Tyr-168 requires receptor activation, is dependent on non-receptor protein tyrosine kinase Src and results in a decrease in agonist efficacy by reducing G-protein coupling efficiency. Phosphorylated on tyrosine residues; the phosphorylation is involved in agonist-induced G-protein-independent receptor down-regulation. Phosphorylation at Ser-377 is involved in G-protein-dependent but not beta-arrestin-dependent activation of the ERK pathway. Post-translationally, ubiquitinated. A basal ubiquitination seems not to be related to degradation. Ubiquitination is increased upon formation of OPRM1:OPRD1 oligomers leading to proteasomal degradation; the ubiquitination is diminished by RTP4. As to expression, expressed in brain. Isoform 16 and isoform 17 are detected in brain.

The protein localises to the cell membrane. It is found in the cell projection. Its subcellular location is the axon. It localises to the perikaryon. The protein resides in the dendrite. The protein localises to the endosome. It is found in the cytoplasm. Its function is as follows. Receptor for endogenous opioids such as beta-endorphin and endomorphin. Receptor for natural and synthetic opioids including morphine, heroin, DAMGO, fentanyl, etorphine, buprenorphin and methadone. Also activated by enkephalin peptides, such as Met-enkephalin or Met-enkephalin-Arg-Phe, with higher affinity for Met-enkephalin-Arg-Phe. Agonist binding to the receptor induces coupling to an inactive GDP-bound heterotrimeric G-protein complex and subsequent exchange of GDP for GTP in the G-protein alpha subunit leading to dissociation of the G-protein complex with the free GTP-bound G-protein alpha and the G-protein beta-gamma dimer activating downstream cellular effectors. The agonist- and cell type-specific activity is predominantly coupled to pertussis toxin-sensitive G(i) and G(o) G alpha proteins, GNAI1, GNAI2, GNAI3 and GNAO1 isoforms Alpha-1 and Alpha-2, and to a lesser extent to pertussis toxin-insensitive G alpha proteins GNAZ and GNA15. They mediate an array of downstream cellular responses, including inhibition of adenylate cyclase activity and both N-type and L-type calcium channels, activation of inward rectifying potassium channels, mitogen-activated protein kinase (MAPK), phospholipase C (PLC), phosphoinositide/protein kinase (PKC), phosphoinositide 3-kinase (PI3K) and regulation of NF-kappa-B. Also couples to adenylate cyclase stimulatory G alpha proteins. The selective temporal coupling to G-proteins and subsequent signaling can be regulated by RGSZ proteins, such as RGS9, RGS17 and RGS4. Phosphorylation by members of the GPRK subfamily of Ser/Thr protein kinases and association with beta-arrestins is involved in short-term receptor desensitization. Beta-arrestins associate with the GPRK-phosphorylated receptor and uncouple it from the G-protein thus terminating signal transduction. The phosphorylated receptor is internalized through endocytosis via clathrin-coated pits which involves beta-arrestins. The activation of the ERK pathway occurs either in a G-protein-dependent or a beta-arrestin-dependent manner and is regulated by agonist-specific receptor phosphorylation. Acts as a class A G-protein coupled receptor (GPCR) which dissociates from beta-arrestin at or near the plasma membrane and undergoes rapid recycling. Receptor down-regulation pathways are varying with the agonist and occur dependent or independent of G-protein coupling. Endogenous ligands induce rapid desensitization, endocytosis and recycling. Heterooligomerization with other GPCRs can modulate agonist binding, signaling and trafficking properties. In terms of biological role, couples to GNAS and is proposed to be involved in excitatory effects. Does not bind agonists but may act through oligomerization with binding-competent OPRM1 isoforms and reduce their ligand binding activity. This chain is Mu-type opioid receptor (OPRM1), found in Homo sapiens (Human).